The chain runs to 278 residues: Sulfur carrier protein FdhD (278 aa).

The active-site Cysteine persulfide intermediate is the Cys121. Position 260-265 (260-265 (FCKPGR)) interacts with Mo-bis(molybdopterin guanine dinucleotide).

The protein belongs to the FdhD family.

The protein resides in the cytoplasm. Its function is as follows. Required for formate dehydrogenase (FDH) activity. Acts as a sulfur carrier protein that transfers sulfur from IscS to the molybdenum cofactor prior to its insertion into FDH. The chain is Sulfur carrier protein FdhD from Salmonella agona (strain SL483).